The primary structure comprises 376 residues: Chaperone protein DnaJ (376 aa).

One can recognise a J domain in the interval Asp5 to Gly70. The CR-type zinc-finger motif lies at Gly132–Asn209. Cys145, Cys148, Cys161, Cys164, Cys183, Cys186, Cys197, and Cys200 together coordinate Zn(2+). CXXCXGXG motif repeat units follow at residues Cys145–Gly152, Cys161–Gly168, Cys183–Gly190, and Cys197–Gly204.

It belongs to the DnaJ family. Homodimer. Zn(2+) serves as cofactor.

Its subcellular location is the cytoplasm. In terms of biological role, participates actively in the response to hyperosmotic and heat shock by preventing the aggregation of stress-denatured proteins and by disaggregating proteins, also in an autonomous, DnaK-independent fashion. Unfolded proteins bind initially to DnaJ; upon interaction with the DnaJ-bound protein, DnaK hydrolyzes its bound ATP, resulting in the formation of a stable complex. GrpE releases ADP from DnaK; ATP binding to DnaK triggers the release of the substrate protein, thus completing the reaction cycle. Several rounds of ATP-dependent interactions between DnaJ, DnaK and GrpE are required for fully efficient folding. Also involved, together with DnaK and GrpE, in the DNA replication of plasmids through activation of initiation proteins. The chain is Chaperone protein DnaJ from Xanthomonas oryzae pv. oryzae (strain PXO99A).